The sequence spans 328 residues: MTATKLHKKVILVGDGAVGSSYAFALVNQGIAQELGIIEIPQLFEKAVGDALDLSHALPFTSPKKIYAAKYEDCADADLVVITAGAPQKPGETRLDLVGKNLAINKSIVTQVVESGFNGIFLVAANPVDVLTYSTWKFSGFPKERVIGSGTSLDSARFRQALAEKLNVDARSVHAYIMGEHGDSEFAVWSHANIAGVNLEEFLKDEENVQEAELVELFEGVRDAAYTIINKKGATYYGIAVALARITKAILDDENAVLPLSVFQEGQYGVNNIFIGQPAIVGAHGIVRPVNIPLNDAEQQKMKASADELQAIIDEAWKNPEFQEASKN.

NAD(+) is bound by residues Val-18, Glu-39, Lys-46, Tyr-71, and 85-86 (GA). Positions 88 and 94 each coordinate substrate. Residues Ser-107, 124–126 (AAN), and Ser-149 each bind NAD(+). 126 to 129 (NPVD) is a binding site for substrate. Substrate is bound at residue 154 to 157 (DSAR). Beta-D-fructose 1,6-bisphosphate contacts are provided by Arg-159 and His-174. His-181 serves as the catalytic Proton acceptor. At Tyr-226 the chain carries Phosphotyrosine. Thr-235 serves as a coordination point for substrate.

Belongs to the LDH/MDH superfamily. LDH family. Homotetramer.

Its subcellular location is the cytoplasm. The catalysed reaction is (S)-lactate + NAD(+) = pyruvate + NADH + H(+). The protein operates within fermentation; pyruvate fermentation to lactate; (S)-lactate from pyruvate: step 1/1. Its activity is regulated as follows. Allosterically activated by fructose 1,6-bisphosphate (FBP). Its function is as follows. Catalyzes the conversion of lactate to pyruvate. The sequence is that of L-lactate dehydrogenase from Streptococcus thermophilus (strain ATCC BAA-250 / LMG 18311).